A 333-amino-acid polypeptide reads, in one-letter code: tRNA dimethylallyltransferase (333 aa).

Position 23–30 (glycine 23–threonine 30) interacts with ATP. Threonine 25–threonine 30 contributes to the substrate binding site. Interaction with substrate tRNA regions lie at residues aspartate 53–leucine 56 and glutamine 177–arginine 181.

The protein belongs to the IPP transferase family. In terms of assembly, monomer. Mg(2+) serves as cofactor.

The catalysed reaction is adenosine(37) in tRNA + dimethylallyl diphosphate = N(6)-dimethylallyladenosine(37) in tRNA + diphosphate. In terms of biological role, catalyzes the transfer of a dimethylallyl group onto the adenine at position 37 in tRNAs that read codons beginning with uridine, leading to the formation of N6-(dimethylallyl)adenosine (i(6)A). The chain is tRNA dimethylallyltransferase from Polynucleobacter asymbioticus (strain DSM 18221 / CIP 109841 / QLW-P1DMWA-1) (Polynucleobacter necessarius subsp. asymbioticus).